Here is a 435-residue protein sequence, read N- to C-terminus: Mitochondrial distribution and morphology protein 12 (435 aa).

Residues 1–435 (MSIEVDWGAA…VYPSFWTFLV (435 aa)) enclose the SMP-LTD domain. 2 disordered regions span residues 73–113 (DEDD…AINH) and 186–268 (WNDS…TSEE). Over residues 96-113 (THPELNESSFRDDNAINH) the composition is skewed to basic and acidic residues. Residues 218–238 (SSNPTSRPSTSSTLPSHPSGS) show a composition bias toward low complexity. Residues 251–268 (HGSHPEEHGHLDDPTSEE) show a composition bias toward basic and acidic residues.

It belongs to the MDM12 family. In terms of assembly, component of the ER-mitochondria encounter structure (ERMES) or MDM complex, composed of mmm1, mdm10, mdm12 and mdm34. A mmm1 homodimer associates with one molecule of mdm12 on each side in a pairwise head-to-tail manner, and the SMP-LTD domains of mmm1 and mdm12 generate a continuous hydrophobic tunnel for phospholipid trafficking.

It is found in the mitochondrion outer membrane. Its subcellular location is the endoplasmic reticulum membrane. Component of the ERMES/MDM complex, which serves as a molecular tether to connect the endoplasmic reticulum (ER) and mitochondria. Components of this complex are involved in the control of mitochondrial shape and protein biogenesis, and function in nonvesicular lipid trafficking between the ER and mitochondria. Mdm12 is required for the interaction of the ER-resident membrane protein mmm1 and the outer mitochondrial membrane-resident beta-barrel protein mdm10. The mdm12-mmm1 subcomplex functions in the major beta-barrel assembly pathway that is responsible for biogenesis of all mitochondrial outer membrane beta-barrel proteins, and acts in a late step after the SAM complex. The mdm10-mdm12-mmm1 subcomplex further acts in the TOM40-specific pathway after the action of the mdm12-mmm1 complex. Essential for establishing and maintaining the structure of mitochondria and maintenance of mtDNA nucleoids. The protein is Mitochondrial distribution and morphology protein 12 of Aspergillus niger (strain ATCC MYA-4892 / CBS 513.88 / FGSC A1513).